A 242-amino-acid polypeptide reads, in one-letter code: Ribosomal RNA small subunit methyltransferase G (242 aa).

S-adenosyl-L-methionine-binding positions include Gly79, Phe84, 130–131, and Arg150; that span reads AE.

This sequence belongs to the methyltransferase superfamily. RNA methyltransferase RsmG family.

The protein resides in the cytoplasm. In terms of biological role, specifically methylates the N7 position of a guanine in 16S rRNA. This Levilactobacillus brevis (strain ATCC 367 / BCRC 12310 / CIP 105137 / JCM 1170 / LMG 11437 / NCIMB 947 / NCTC 947) (Lactobacillus brevis) protein is Ribosomal RNA small subunit methyltransferase G.